A 248-amino-acid polypeptide reads, in one-letter code: 2,3-dihydro-2,3-dihydroxybenzoate dehydrogenase (248 aa).

An NAD(+)-binding site is contributed by 9-33 (WVTGAGKGIGYATALAFVEAGAKVT). Ser-131 contacts substrate. The active-site Proton acceptor is Tyr-144.

Belongs to the short-chain dehydrogenases/reductases (SDR) family. Homotetramer; dimer of dimers. EntA and EntE interact together.

It catalyses the reaction (2S,3S)-2,3-dihydroxy-2,3-dihydrobenzoate + NAD(+) = 2,3-dihydroxybenzoate + NADH + H(+). The protein operates within siderophore biosynthesis; enterobactin biosynthesis. Its activity is regulated as follows. Inhibited by cis-2-hydroxy-3-cyclohexen-1-carboxylate, cis-2-hydroxycyclohexane-1-carboxylate and trans-2-hydroxycyclohexane-1-carboxylate. Functionally, involved in the biosynthesis of the siderophore enterobactin (enterochelin), which is a macrocyclic trimeric lactone of N-(2,3-dihydroxybenzoyl)-serine. Catalyzes the reversible NAD-dependent oxidation of the C3-hydroxyl group of 2,3-dihydro-2,3-dihydroxybenzoate (2,3-diDHB), producing the transient intermediate 2-hydroxy-3-oxo-4,6-cyclohexadiene-1-carboxylate, which undergoes rapid aromatization to the final product, 2,3-dihydroxybenzoate (2,3-DHB). Only the compounds with a C3-hydroxyl group such as methyl 2,3-dihydro-2,3-dihydroxybenzoate, methyl-3-hydroxy-1,4-cyclohexadiene-1-carboxylate, trans-3-hydroxy-2-cyclohexene-1-carboxylate, cis-3-hydroxy-4-cyclohexene-1-carboxylate, cis-3-hydroxycyclohexane-1-carboxylic acid are oxidized to the corresponding ketone products. The stereospecificity of the C3 allylic alcohol group oxidation is 3R in a 1R,3R dihydro substrate. It can also increase the DHB-AMP ligase activity of EntE by interaction EntE. This is 2,3-dihydro-2,3-dihydroxybenzoate dehydrogenase from Escherichia coli (strain K12).